A 597-amino-acid chain; its full sequence is Elongation factor 4 (597 aa).

Residues 2 to 184 enclose the tr-type G domain; that stretch reads KHIRNFSIIA…KIVSAIPAPQ (183 aa). GTP contacts are provided by residues 14–19 and 131–134; these read DHGKST and NKID.

This sequence belongs to the TRAFAC class translation factor GTPase superfamily. Classic translation factor GTPase family. LepA subfamily.

It localises to the cell inner membrane. It catalyses the reaction GTP + H2O = GDP + phosphate + H(+). In terms of biological role, required for accurate and efficient protein synthesis under certain stress conditions. May act as a fidelity factor of the translation reaction, by catalyzing a one-codon backward translocation of tRNAs on improperly translocated ribosomes. Back-translocation proceeds from a post-translocation (POST) complex to a pre-translocation (PRE) complex, thus giving elongation factor G a second chance to translocate the tRNAs correctly. Binds to ribosomes in a GTP-dependent manner. The sequence is that of Elongation factor 4 from Vibrio cholerae serotype O1 (strain ATCC 39541 / Classical Ogawa 395 / O395).